The sequence spans 580 residues: 2-succinyl-5-enolpyruvyl-6-hydroxy-3-cyclohexene-1-carboxylate synthase (580 aa).

Belongs to the TPP enzyme family. MenD subfamily. Homodimer. Requires Mg(2+) as cofactor. Mn(2+) serves as cofactor. Thiamine diphosphate is required as a cofactor.

The enzyme catalyses isochorismate + 2-oxoglutarate + H(+) = 5-enolpyruvoyl-6-hydroxy-2-succinyl-cyclohex-3-ene-1-carboxylate + CO2. Its pathway is quinol/quinone metabolism; 1,4-dihydroxy-2-naphthoate biosynthesis; 1,4-dihydroxy-2-naphthoate from chorismate: step 2/7. It participates in quinol/quinone metabolism; menaquinone biosynthesis. In terms of biological role, catalyzes the thiamine diphosphate-dependent decarboxylation of 2-oxoglutarate and the subsequent addition of the resulting succinic semialdehyde-thiamine pyrophosphate anion to isochorismate to yield 2-succinyl-5-enolpyruvyl-6-hydroxy-3-cyclohexene-1-carboxylate (SEPHCHC). The sequence is that of 2-succinyl-5-enolpyruvyl-6-hydroxy-3-cyclohexene-1-carboxylate synthase from Listeria monocytogenes serovar 1/2a (strain ATCC BAA-679 / EGD-e).